A 613-amino-acid chain; its full sequence is MSPHEVIGTVPKNSTTFRTQADEHDDHEEALQNLRTGKYEDWPNEAAFDGLTEERGPIKIAVTGNIPTWAAGSLYRTGPGLYKIDTDAGTTFEMSHWFDGLAHTHRFDIIPNEEGSVDIFYSSRRQAEEMMDVIKKQGTWPYYSFGQKADPCLGFFAKAMAAFKGLREPSGEKWHNNVNVAVHVNPPGLEAVRNIVGTRKPAVAENDANVLGHRPELPKSIWVSTDNSTMKQIDPQTLEPIGWATQDVLHPELTGAMSCAHAQRDPDTGDFFNFNLEFGPKPTYRVFRVDASSGKTEILATIREPSVSPAYIHSLFLSPSFVILCIPTSHFGLSGTQIPWERNLVDAIKPYDPSRKTQWIVIDRKHSKGVVARFETDGRFFFHTVNSFEEKAGSDSSDINLYCDVIDFGSHEFIHSLYLDVILNRDSAAKKFYEDEQRARNSLAHLTRYHFIINPDSPTTNLPVTPTPDPKNHEAFRIPAPHAGEIPTINPLYATRKHRYVYSLPFRGRGTITDAIVKTDTVTREALFWDNPKGHTPGEAIFIPRPGGEEEDDGVLLSLVLDGEKGKSYLLCLDAKTMAEMGRAEVDFAIALGFHGAHVPSGRTLTRVEGPEY.

Residues 1–25 (MSPHEVIGTVPKNSTTFRTQADEHD) form a disordered region. Fe(2+) contacts are provided by His-261, His-313, His-383, and His-595.

This sequence belongs to the carotenoid oxygenase family. It depends on Fe(2+) as a cofactor.

It localises to the cytoplasm. The protein localises to the cytosol. The catalysed reaction is torulene + O2 = 4'-apo-beta-carotenal + 3-methyl-2-butenal. It participates in carotenoid biosynthesis. Functionally, torulene dioxygenase; part of pathway that mediates the biosynthesis of neurosporaxanthin, a carboxylic apocarotenoid acting as an essential protective pigments and leading to orange pigmentation. Cao-2 mediates the cleavage of torulene into beta-apo-4'-carotenal, the aldehyde corresponding to the acidic neurosporaxanthin. Is not able to use gamma-carotene (that it is not desaturated at the C4'-C5' bond) as substrate, which suggests a high specificity of cao-2 in cleaving the C4'-C5' double bond. Neurosporaxanthin is synthesized from geranyl-geranyl pyrophosphate (GGPP) through several enzymatic activities. Phytoene synthase activity performed by the bifunctional enzyme al-2 first produces phytoene from geranyl-geranyl pyrophosphate (GGPP). The phytoene dehydrogenase al-1 then introduces 5 desaturations to lead to 3,4-didehydrolycopene via the intermediates phytofluene, zeta-carotene, neurosporene and lycopene. Al-2 cyclase activity then converts 3,4-didehydrolycopene into torulene. Al-2 can also convet lycopene into gamma-carotene which in turn is converted to beta-carotene by an additional al-2 cyclization reaction. Torulene is the substrate of the dioxidase cao-2 that breaks the molecule, removing five carbon atoms to yield beta-apo-4'-carotenal, whereas the aldehyde dehydrogenase ylo-1 mediates the last step by converting beta-apo-4'-carotenal into neurosporaxanthin. This is Carotenoid dioxygenase from Neurospora crassa (strain ATCC 24698 / 74-OR23-1A / CBS 708.71 / DSM 1257 / FGSC 987).